Here is a 486-residue protein sequence, read N- to C-terminus: Argininosuccinate lyase (486 aa).

It belongs to the lyase 1 family. Argininosuccinate lyase subfamily.

Its subcellular location is the cytoplasm. It carries out the reaction 2-(N(omega)-L-arginino)succinate = fumarate + L-arginine. It participates in amino-acid biosynthesis; L-arginine biosynthesis; L-arginine from L-ornithine and carbamoyl phosphate: step 3/3. This is Argininosuccinate lyase from Acidovorax ebreus (strain TPSY) (Diaphorobacter sp. (strain TPSY)).